The chain runs to 105 residues: Small ribosomal subunit protein uS10 (105 aa).

This sequence belongs to the universal ribosomal protein uS10 family. Part of the 30S ribosomal subunit.

Its function is as follows. Involved in the binding of tRNA to the ribosomes. This Rickettsia bellii (strain OSU 85-389) protein is Small ribosomal subunit protein uS10.